The primary structure comprises 658 residues: ATP-dependent RNA helicase DDX3Y (658 aa).

A compositionally biased stretch (basic and acidic residues) spans 1 to 10 (MSHVVVKNDP). The interval 1–141 (MSHVVVKNDP…DDWSKPLPPS (141 aa)) is disordered. S2 carries the N-acetylserine modification. Positions 15 to 34 (QLANLDLNSEKQSGGASTAS) are enriched in polar residues. Residues 44–68 (RNREASKGFHDKDSSGWSCSKDKDA) are compositionally biased toward basic and acidic residues. The residue at position 55 (K55) is an N6-acetyllysine. Residues S81, S85, and S89 each carry the phosphoserine modification. Basic and acidic residues predominate over residues 93–128 (GRFDDRGRSDYDGIGNRDRPGFGRFERSGHSRWCDK). R100 is modified (omega-N-methylarginine). S101 is modified (phosphoserine). Y103 carries the phosphotyrosine modification. Omega-N-methylarginine is present on R109. Phosphoserine is present on residues S129 and S181. Residues 178-206 (ENFSDIDMGEIIMGNIELTRYTRPTPVQK) carry the Q motif motif. An ATP-binding site is contributed by 198–205 (YTRPTPVQ). A Helicase ATP-binding domain is found at 209–401 (IPIIKGKRDL…RDFLDEYIFL (193 aa)). K213 participates in a covalent cross-link: Glycyl lysine isopeptide (Lys-Gly) (interchain with G-Cter in SUMO2). Residue 222-229 (AQTGSGKT) participates in ATP binding. The DEAD box motif lies at 345-348 (DEAD). The 162-residue stretch at 412-573 (NITQKVVWVE…EVPSWLENMA (162 aa)) folds into the Helicase C-terminal domain. Residue S454 is modified to Phosphoserine. R588 bears the Omega-N-methylarginine mark. Residues S590 and S601 each carry the phosphoserine modification. Residues 597–625 (DYRQSSGSSSSGFGASRGSSSRSGGSGYG) form a disordered region. A compositionally biased stretch (low complexity) spans 601-619 (SSGSSSSGFGASRGSSSRS). R613 and R628 each carry omega-N-methylarginine.

This sequence belongs to the DEAD box helicase family. DDX3/DED1 subfamily. In terms of assembly, may interact with TDRD3.

Its subcellular location is the cytoplasm. The protein resides in the nucleus. It catalyses the reaction ATP + H2O = ADP + phosphate + H(+). In terms of biological role, probable ATP-dependent RNA helicase. May play a role in spermatogenesis. This Pongo abelii (Sumatran orangutan) protein is ATP-dependent RNA helicase DDX3Y (DDX3Y).